Reading from the N-terminus, the 478-residue chain is GDP-fucose protein O-fucosyltransferase 3 (478 aa).

Topologically, residues 1 to 8 (MVWIQRRR) are cytoplasmic. Residues 9–31 (LLASCLCITATVFLLVTLQVVVE) traverse the membrane as a helical; Signal-anchor for type II membrane protein segment. Residues 32-478 (LGKFERKKFK…QEFWALVFKD (447 aa)) are Lumenal-facing. 2 N-linked (GlcNAc...) asparagine glycosylation sites follow: N110 and N168. An intrachain disulfide couples C389 to C392.

This sequence belongs to the glycosyltransferase 10 family.

Its subcellular location is the endoplasmic reticulum membrane. The catalysed reaction is L-threonyl-[protein] + GDP-beta-L-fucose = 3-O-(alpha-L-fucosyl)-L-threonyl-[protein] + GDP + H(+). It catalyses the reaction L-seryl-[protein] + GDP-beta-L-fucose = 3-O-(alpha-L-fucosyl)-L-seryl-[protein] + GDP + H(+). The protein operates within protein modification; protein glycosylation. Its function is as follows. Protein O-fucosyltransferase that specifically catalyzes O-fucosylation of serine or threonine residues in EMI domains of target proteins, such as MMRN1, MMRN2 and EMID1. Attaches fucose through an O-glycosidic linkage. O-fucosylation of EMI domain-containing proteins may be required for facilitating protein folding and secretion. May also show alpha-(1,3)-fucosyltransferase activity toward the innermost N-acetyl glucosamine (GlcNAc) residue in biantennary N-glycan acceptors. However, this was tested with a library of synthetic substrates and this activity is unsure in vivo. May be involved in biosynthesis of Lewis X-carrying biantennary N-glycans that regulate neuron stem cell self-renewal during brain development. This Canis lupus familiaris (Dog) protein is GDP-fucose protein O-fucosyltransferase 3 (FUT10).